A 414-amino-acid polypeptide reads, in one-letter code: Phosphopentomutase (414 aa).

6 residues coordinate Mn(2+): aspartate 10, aspartate 309, histidine 314, aspartate 350, histidine 351, and histidine 362.

Belongs to the phosphopentomutase family. Requires Mn(2+) as cofactor.

It is found in the cytoplasm. The catalysed reaction is 2-deoxy-alpha-D-ribose 1-phosphate = 2-deoxy-D-ribose 5-phosphate. It catalyses the reaction alpha-D-ribose 1-phosphate = D-ribose 5-phosphate. It participates in carbohydrate degradation; 2-deoxy-D-ribose 1-phosphate degradation; D-glyceraldehyde 3-phosphate and acetaldehyde from 2-deoxy-alpha-D-ribose 1-phosphate: step 1/2. Isomerase that catalyzes the conversion of deoxy-ribose 1-phosphate (dRib-1-P) and ribose 1-phosphate (Rib-1-P) to deoxy-ribose 5-phosphate (dRib-5-P) and ribose 5-phosphate (Rib-5-P), respectively. In Hahella chejuensis (strain KCTC 2396), this protein is Phosphopentomutase.